Consider the following 180-residue polypeptide: Amnesiac neuropeptides (180 aa).

A signal peptide spans 1-32 (MRSFCCCFYPAAVALHCVLLFYTFFLLFRASA). 2 consecutive propeptides follow at residues 33–35 (LRR) and 152–180 (GRRS…GEMR). Residues 155–180 (SVPRGQPKFSRENPRALSPSLLGEMR) are disordered.

In terms of tissue distribution, enriched expression in the embryonic and larval nervous systems. Strongly expressed in two large neurons that project over all the lobes of the mushroom bodies.

Its subcellular location is the secreted. In terms of biological role, required for associative learning and memory in adults. Expression pattern suggests a modulatory role in memory formation. Controls neurotransmitter-mediated signaling pathways associated with the structure of the larval peripheral nerve. The chain is Amnesiac neuropeptides (amn) from Drosophila melanogaster (Fruit fly).